Reading from the N-terminus, the 198-residue chain is Dephospho-CoA kinase (198 aa).

The region spanning 3–198 is the DPCK domain; that stretch reads LIGLTGGIAS…VDALWAGLRG (196 aa). Position 11 to 16 (11 to 16) interacts with ATP; that stretch reads ASGKST.

Belongs to the CoaE family.

It is found in the cytoplasm. It catalyses the reaction 3'-dephospho-CoA + ATP = ADP + CoA + H(+). Its pathway is cofactor biosynthesis; coenzyme A biosynthesis; CoA from (R)-pantothenate: step 5/5. Functionally, catalyzes the phosphorylation of the 3'-hydroxyl group of dephosphocoenzyme A to form coenzyme A. This is Dephospho-CoA kinase from Leifsonia xyli subsp. xyli (strain CTCB07).